The following is a 329-amino-acid chain: 4-hydroxythreonine-4-phosphate dehydrogenase (329 aa).

Residues histidine 136 and threonine 137 each contribute to the substrate site. 3 residues coordinate a divalent metal cation: histidine 166, histidine 211, and histidine 266. Lysine 274, asparagine 283, and arginine 292 together coordinate substrate.

The protein belongs to the PdxA family. Homodimer. Zn(2+) serves as cofactor. Mg(2+) is required as a cofactor. The cofactor is Co(2+).

Its subcellular location is the cytoplasm. It carries out the reaction 4-(phosphooxy)-L-threonine + NAD(+) = 3-amino-2-oxopropyl phosphate + CO2 + NADH. Its pathway is cofactor biosynthesis; pyridoxine 5'-phosphate biosynthesis; pyridoxine 5'-phosphate from D-erythrose 4-phosphate: step 4/5. Functionally, catalyzes the NAD(P)-dependent oxidation of 4-(phosphooxy)-L-threonine (HTP) into 2-amino-3-oxo-4-(phosphooxy)butyric acid which spontaneously decarboxylates to form 3-amino-2-oxopropyl phosphate (AHAP). This is 4-hydroxythreonine-4-phosphate dehydrogenase from Escherichia coli O7:K1 (strain IAI39 / ExPEC).